The following is a 185-amino-acid chain: Ribosome-recycling factor (185 aa).

Belongs to the RRF family.

The protein localises to the cytoplasm. Its function is as follows. Responsible for the release of ribosomes from messenger RNA at the termination of protein biosynthesis. May increase the efficiency of translation by recycling ribosomes from one round of translation to another. This chain is Ribosome-recycling factor, found in Salinispora tropica (strain ATCC BAA-916 / DSM 44818 / JCM 13857 / NBRC 105044 / CNB-440).